The primary structure comprises 405 residues: Tryptophan synthase beta chain (405 aa).

An N6-(pyridoxal phosphate)lysine modification is found at Lys98.

Belongs to the TrpB family. In terms of assembly, tetramer of two alpha and two beta chains. Requires pyridoxal 5'-phosphate as cofactor.

The catalysed reaction is (1S,2R)-1-C-(indol-3-yl)glycerol 3-phosphate + L-serine = D-glyceraldehyde 3-phosphate + L-tryptophan + H2O. It functions in the pathway amino-acid biosynthesis; L-tryptophan biosynthesis; L-tryptophan from chorismate: step 5/5. Its function is as follows. The beta subunit is responsible for the synthesis of L-tryptophan from indole and L-serine. In Xanthomonas oryzae pv. oryzae (strain PXO99A), this protein is Tryptophan synthase beta chain.